A 129-amino-acid polypeptide reads, in one-letter code: Small ribosomal subunit protein uS11 (129 aa).

This sequence belongs to the universal ribosomal protein uS11 family. In terms of assembly, part of the 30S ribosomal subunit. Interacts with proteins S7 and S18. Binds to IF-3.

Functionally, located on the platform of the 30S subunit, it bridges several disparate RNA helices of the 16S rRNA. Forms part of the Shine-Dalgarno cleft in the 70S ribosome. The chain is Small ribosomal subunit protein uS11 from Oleidesulfovibrio alaskensis (strain ATCC BAA-1058 / DSM 17464 / G20) (Desulfovibrio alaskensis).